Reading from the N-terminus, the 358-residue chain is Neuronal-specific septin-3 (358 aa).

A compositionally biased stretch (basic and acidic residues) spans 1-10; it reads MSKGLPEART. Residues 1-29 are disordered; that stretch reads MSKGLPEARTDTAMSELVPEPRPKPAVPM. In terms of domain architecture, Septin-type G spans 58-331; it reads TGFDFNIMVV…ETYRAKRLND (274 aa). The segment at 68–75 is G1 motif; the sequence is GQSGLGKS. A GTP-binding site is contributed by 68-75; it reads GQSGLGKS. Ser-91 is subject to Phosphoserine. Thr-102 lines the GTP pocket. The interval 125 to 128 is G3 motif; the sequence is DTPG. The tract at residues 207 to 210 is G4 motif; it reads AKAD. Residues 208 to 216, Gly-265, and Arg-280 each bind GTP; that span reads KADTMTLEE.

Belongs to the TRAFAC class TrmE-Era-EngA-EngB-Septin-like GTPase superfamily. Septin GTPase family. In terms of assembly, septins polymerize into heterooligomeric protein complexes that form filaments, and can associate with cellular membranes, actin filaments and microtubules. GTPase activity is required for filament formation. Post-translationally, phosphorylated by PKG on serine residues. Phosphorylated by PKG on Ser-91. In terms of tissue distribution, brain-specific, with highest expression in the hippocampal CA3 region (at protein level).

It is found in the cytoplasm. The protein localises to the cytoskeleton. Its subcellular location is the synapse. Functionally, filament-forming cytoskeletal GTPase. May play a role in cytokinesis (Potential). This chain is Neuronal-specific septin-3, found in Rattus norvegicus (Rat).